The primary structure comprises 597 residues: Aspartate--tRNA ligase (597 aa).

Residue Glu180 coordinates L-aspartate. The tract at residues 204–207 (QLFK) is aspartate. Residue Arg226 coordinates L-aspartate. ATP contacts are provided by residues 226–228 (RDE) and Gln235. His454 provides a ligand contact to L-aspartate. Glu488 is a binding site for ATP. Arg495 serves as a coordination point for L-aspartate. 540–543 (GLDR) lines the ATP pocket.

The protein belongs to the class-II aminoacyl-tRNA synthetase family. Type 1 subfamily. In terms of assembly, homodimer.

It localises to the cytoplasm. The enzyme catalyses tRNA(Asp) + L-aspartate + ATP = L-aspartyl-tRNA(Asp) + AMP + diphosphate. Its function is as follows. Catalyzes the attachment of L-aspartate to tRNA(Asp) in a two-step reaction: L-aspartate is first activated by ATP to form Asp-AMP and then transferred to the acceptor end of tRNA(Asp). The protein is Aspartate--tRNA ligase of Clostridium perfringens (strain SM101 / Type A).